The sequence spans 101 residues: Small ribosomal subunit protein uS14 (101 aa).

It belongs to the universal ribosomal protein uS14 family. Part of the 30S ribosomal subunit. Contacts proteins S3 and S10.

Functionally, binds 16S rRNA, required for the assembly of 30S particles and may also be responsible for determining the conformation of the 16S rRNA at the A site. This chain is Small ribosomal subunit protein uS14, found in Ruegeria sp. (strain TM1040) (Silicibacter sp.).